A 287-amino-acid polypeptide reads, in one-letter code: Ribosomal RNA small subunit methyltransferase A (287 aa).

Residues Asn28, Leu30, Gly55, Glu76, Asp101, and Asn125 each contribute to the S-adenosyl-L-methionine site.

This sequence belongs to the class I-like SAM-binding methyltransferase superfamily. rRNA adenine N(6)-methyltransferase family. RsmA subfamily.

It is found in the cytoplasm. It catalyses the reaction adenosine(1518)/adenosine(1519) in 16S rRNA + 4 S-adenosyl-L-methionine = N(6)-dimethyladenosine(1518)/N(6)-dimethyladenosine(1519) in 16S rRNA + 4 S-adenosyl-L-homocysteine + 4 H(+). Functionally, specifically dimethylates two adjacent adenosines (A1518 and A1519) in the loop of a conserved hairpin near the 3'-end of 16S rRNA in the 30S particle. May play a critical role in biogenesis of 30S subunits. In Alkaliphilus metalliredigens (strain QYMF), this protein is Ribosomal RNA small subunit methyltransferase A.